Consider the following 1088-residue polypeptide: RNA-directed RNA polymerase (1088 aa).

The RdRp catalytic domain occupies 501-687; it reads LSYGDVTRFL…AKRYLAGGKI (187 aa).

Belongs to the reoviridae RNA-directed RNA polymerase family. As to quaternary structure, interacts with VP3 (Potential). Interacts with VP2; this interaction activates VP1. Interacts with NSP5; this interaction is probably necessary for the formation of functional virus factories. Interacts with NSP2; this interaction is weak. Mg(2+) is required as a cofactor.

It localises to the virion. It catalyses the reaction RNA(n) + a ribonucleoside 5'-triphosphate = RNA(n+1) + diphosphate. RNA-directed RNA polymerase that is involved in both transcription and genome replication. Together with VP3 capping enzyme, forms an enzyme complex positioned near the channels situated at each of the five-fold vertices of the core. Following infection, the outermost layer of the virus is lost, leaving a double-layered particle (DLP) made up of the core and VP6 shell. VP1 then catalyzes the transcription of fully conservative plus-strand genomic RNAs that are extruded through the DLP's channels into the cytoplasm where they function as mRNAs for translation of viral proteins. One copy of each of the viral (+)RNAs is also recruited during core assembly, together with newly synthesized polymerase complexes and VP2. The polymerase of these novo-formed particles catalyzes the synthesis of complementary minus-strands leading to dsRNA formation. To do so, the polymerase specifically recognizes and binds 4 bases 5'-UGUG-3' in the conserved 3'-sequence of plus-strand RNA templates. VP2 presumably activates the autoinhibited VP1-RNA complex to coordinate packaging and genome replication. Once dsRNA synthesis is complete, the polymerase switches to the transcriptional mode, thus providing secondary transcription. The sequence is that of RNA-directed RNA polymerase from Rotavirus A (strain RVA/Human/Japan/KU/1995/G1P1A[8]) (RV-A).